A 157-amino-acid chain; its full sequence is Lectin (157 aa).

C37 and C54 are oxidised to a cystine.

Homodimer. In terms of tissue distribution, detected in fruits (at protein level).

The protein resides in the secreted. Functionally, binds with high affinity specifically to chito-oligosaccharides. May play a role in plant defense against pathogens by directly binding with the chitin cell wall. Forms filamentous structures at higher concentrations and may promote wound healing by forming filaments with phloem proteins like PP1. In Coccinia grandis (Ivy gourd), this protein is Lectin.